Consider the following 405-residue polypeptide: Secreted aspartic protease FUS4 (405 aa).

An N-terminal signal peptide occupies residues 1 to 24 (MLAIATLHVALQVFGAFSLSHAAA). The region spanning 49 to 400 (YLFNVTVGSP…NFEERSFGLA (352 aa)) is the Peptidase A1 domain. Residues asparagine 52, asparagine 61, asparagine 107, and asparagine 123 are each glycosylated (N-linked (GlcNAc...) asparagine). Cysteines 318 and 356 form a disulfide.

It belongs to the peptidase A1 family.

The protein localises to the secreted. In terms of biological role, secreted aspartic protease; part of the gene cluster that mediates the biosynthesis of the mycotoxin fusarin C. Within the cluster, FUS1, FUS2, FUS8 and FUS9 are sufficient for fusarin production. The other FUS cluster members are not essential for fusarin C biosynthesis. The chain is Secreted aspartic protease FUS4 from Gibberella fujikuroi (strain CBS 195.34 / IMI 58289 / NRRL A-6831) (Bakanae and foot rot disease fungus).